We begin with the raw amino-acid sequence, 138 residues long: ATP synthase epsilon chain, chloroplastic (138 aa).

Belongs to the ATPase epsilon chain family. As to quaternary structure, F-type ATPases have 2 components, CF(1) - the catalytic core - and CF(0) - the membrane proton channel. CF(1) has five subunits: alpha(3), beta(3), gamma(1), delta(1), epsilon(1). CF(0) has three main subunits: a, b and c.

Its subcellular location is the plastid. It localises to the chloroplast thylakoid membrane. Produces ATP from ADP in the presence of a proton gradient across the membrane. The polypeptide is ATP synthase epsilon chain, chloroplastic (Anthoceros angustus (Hornwort)).